Consider the following 337-residue polypeptide: Holliday junction branch migration complex subunit RuvB (337 aa).

Positions 4-184 are large ATPase domain (RuvB-L); the sequence is ADRLIEPIAS…FGIVQRLEFY (181 aa). ATP contacts are provided by residues Ile23, Arg24, Gly65, Lys68, Thr69, Thr70, 131-133, Arg174, Tyr184, and Arg221; that span reads EDY. Residue Thr69 participates in Mg(2+) binding. Residues 185–255 are small ATPAse domain (RuvB-S); sequence NVADLSTIVS…TAAAALDMLE (71 aa). The head domain (RuvB-H) stretch occupies residues 258–337; the sequence is SEGFDIMDRK…FGITKDQTKD (80 aa). 3 residues coordinate DNA: Arg294, Arg313, and Arg318.

The protein belongs to the RuvB family. As to quaternary structure, homohexamer. Forms an RuvA(8)-RuvB(12)-Holliday junction (HJ) complex. HJ DNA is sandwiched between 2 RuvA tetramers; dsDNA enters through RuvA and exits via RuvB. An RuvB hexamer assembles on each DNA strand where it exits the tetramer. Each RuvB hexamer is contacted by two RuvA subunits (via domain III) on 2 adjacent RuvB subunits; this complex drives branch migration. In the full resolvosome a probable DNA-RuvA(4)-RuvB(12)-RuvC(2) complex forms which resolves the HJ.

It localises to the cytoplasm. It carries out the reaction ATP + H2O = ADP + phosphate + H(+). Its function is as follows. The RuvA-RuvB-RuvC complex processes Holliday junction (HJ) DNA during genetic recombination and DNA repair, while the RuvA-RuvB complex plays an important role in the rescue of blocked DNA replication forks via replication fork reversal (RFR). RuvA specifically binds to HJ cruciform DNA, conferring on it an open structure. The RuvB hexamer acts as an ATP-dependent pump, pulling dsDNA into and through the RuvAB complex. RuvB forms 2 homohexamers on either side of HJ DNA bound by 1 or 2 RuvA tetramers; 4 subunits per hexamer contact DNA at a time. Coordinated motions by a converter formed by DNA-disengaged RuvB subunits stimulates ATP hydrolysis and nucleotide exchange. Immobilization of the converter enables RuvB to convert the ATP-contained energy into a lever motion, pulling 2 nucleotides of DNA out of the RuvA tetramer per ATP hydrolyzed, thus driving DNA branch migration. The RuvB motors rotate together with the DNA substrate, which together with the progressing nucleotide cycle form the mechanistic basis for DNA recombination by continuous HJ branch migration. Branch migration allows RuvC to scan DNA until it finds its consensus sequence, where it cleaves and resolves cruciform DNA. In Colwellia psychrerythraea (strain 34H / ATCC BAA-681) (Vibrio psychroerythus), this protein is Holliday junction branch migration complex subunit RuvB.